Reading from the N-terminus, the 698-residue chain is Elongation factor G 1 (698 aa).

The tr-type G domain occupies 8–290 (ERYRNIGIVA…AVVDFLPAPI (283 aa)). GTP contacts are provided by residues 17–24 (AHVDAGKT), 88–92 (DTPGH), and 142–145 (NKMD).

Belongs to the TRAFAC class translation factor GTPase superfamily. Classic translation factor GTPase family. EF-G/EF-2 subfamily.

The protein localises to the cytoplasm. Catalyzes the GTP-dependent ribosomal translocation step during translation elongation. During this step, the ribosome changes from the pre-translocational (PRE) to the post-translocational (POST) state as the newly formed A-site-bound peptidyl-tRNA and P-site-bound deacylated tRNA move to the P and E sites, respectively. Catalyzes the coordinated movement of the two tRNA molecules, the mRNA and conformational changes in the ribosome. This chain is Elongation factor G 1, found in Shewanella frigidimarina (strain NCIMB 400).